We begin with the raw amino-acid sequence, 621 residues long: Putative 5'-3' exonuclease R528 (621 aa).

This sequence belongs to the 5'-3' exonuclease family.

The protein resides in the virion. In Acanthamoeba polyphaga mimivirus (APMV), this protein is Putative 5'-3' exonuclease R528.